Consider the following 612-residue polypeptide: MIVDNSKDFDLKSFLANLTTHSGVYRMLDKHGEIIYVGKAKNLKNRVNSYFSKGAKDSKTLMMVEQIARIEITITPSDYEAYLLENNLIKQHRPKYNILFKDDKSYPYLVISRDKFPRVSFYRGKSAYKKGQCFGPYVSISSVKNTLNTIQKIFPIRQCENSYYKSRVRPCLQYQIKRCLAPCVGLVSQQQYDEQLAILKKFLAGKFSSVLEEISAKMYQASEDMEYEKAQVYRDQLVVLRKLQQQQIVDIQEDKTFDVIGIYMQDSYASIALLQIQNGDVVADRHWSIDAKGQDKTSIMHAFLSHFYLGDEIRNIWPKNIILSKVEFADITDLMNSISQKIGQAINWIIAPAADNLKWLKLAEVNARQKLNIYTSSKSQYQKRLESLKEFLELEKDIKRIECFDISHFQGEATIASCVVYTDDGEDRKSHRRYNIKDIKSGDDYAAIHQAVSRRVSSGLEADNLPDVMIIDGGKGQIHQAEAVFREYGIQDKVQIVSLGKGVERISGKEKIYKGFDDTEYTLDEHNPGFLLLRQVRDSAHDHAIKGQRKKVSANRQSSIIEEIEGVGPKRRKALMMYFGGWQELSRASVDEIAKVKGISKKLAQEIWECFH.

The region spanning 20–98 (THSGVYRMLD…IKQHRPKYNI (79 aa)) is the GIY-YIG domain. The UVR domain maps to 208–243 (SSVLEEISAKMYQASEDMEYEKAQVYRDQLVVLRKL).

It belongs to the UvrC family. Interacts with UvrB in an incision complex.

It is found in the cytoplasm. In terms of biological role, the UvrABC repair system catalyzes the recognition and processing of DNA lesions. UvrC both incises the 5' and 3' sides of the lesion. The N-terminal half is responsible for the 3' incision and the C-terminal half is responsible for the 5' incision. This Francisella tularensis subsp. tularensis (strain WY96-3418) protein is UvrABC system protein C.